A 416-amino-acid chain; its full sequence is Zinc finger protein 92 homolog (416 aa).

Residues 14–85 (VSFEDVSVYF…DIPRTWATAG (72 aa)) form the KRAB domain. The tract at residues 86–125 (LHIGDRTQSKTSTSTQKHSGRQLPGADPQGGKEGQAARSS) is disordered. 8 consecutive C2H2-type zinc fingers follow at residues 152–174 (YLCQ…RIIH), 180–202 (YACP…QRIH), 208–230 (YACP…QVIH), 236–258 (FACG…ARVH), 264–286 (YACP…QRTH), 292–314 (YACG…QRSH), 320–342 (FACR…RRVH), and 348–370 (YECS…QAVH). Positions 368–416 (AVHGARRPAKAETARRLAGPGSTGPGSAVAATSPPRPSTAARPSRPSRR) are disordered. Residues 394–416 (SAVAATSPPRPSTAARPSRPSRR) show a composition bias toward low complexity.

The protein belongs to the krueppel C2H2-type zinc-finger protein family.

The protein localises to the nucleus. Its function is as follows. KRAB domain-containing zinc-finger protein that represses B1/Alu SINE transposable elements and modulates the transcription of nearby genes in a tissue-specific manner. It regulates glucose homeostasis and lipid metabolism by modulating the expression of the endocrine cell-defining transcription factor, MAFB, in pancreatic islets and, the fat metabolism regulator, ACACB, in adipose tissue and muscle. This is Zinc finger protein 92 homolog (ZFP92) from Homo sapiens (Human).